Here is a 314-residue protein sequence, read N- to C-terminus: Homoserine O-succinyltransferase (314 aa).

Residue Cys142 is the Acyl-thioester intermediate of the active site. The substrate site is built by Lys163 and Ser192. His235 serves as the catalytic Proton acceptor. Glu237 is a catalytic residue. Arg249 is a substrate binding site.

The protein belongs to the MetA family.

Its subcellular location is the cytoplasm. It catalyses the reaction L-homoserine + succinyl-CoA = O-succinyl-L-homoserine + CoA. It participates in amino-acid biosynthesis; L-methionine biosynthesis via de novo pathway; O-succinyl-L-homoserine from L-homoserine: step 1/1. Its function is as follows. Transfers a succinyl group from succinyl-CoA to L-homoserine, forming succinyl-L-homoserine. The sequence is that of Homoserine O-succinyltransferase from Shewanella frigidimarina (strain NCIMB 400).